The primary structure comprises 320 residues: Malate dehydrogenase (320 aa).

NAD(+) is bound by residues 10 to 15 (GSGMIG) and Asp-34. The substrate site is built by Arg-83 and Arg-89. NAD(+) is bound by residues Asn-96 and 119–121 (ITN). Positions 121 and 152 each coordinate substrate. His-176 (proton acceptor) is an active-site residue.

The protein belongs to the LDH/MDH superfamily. MDH type 3 family.

The enzyme catalyses (S)-malate + NAD(+) = oxaloacetate + NADH + H(+). Catalyzes the reversible oxidation of malate to oxaloacetate. This is Malate dehydrogenase from Brucella melitensis biotype 2 (strain ATCC 23457).